We begin with the raw amino-acid sequence, 461 residues long: UDP-N-acetylmuramoylalanine--D-glutamate ligase (461 aa).

117–123 (GTNGKTT) lines the ATP pocket.

The protein belongs to the MurCDEF family.

The protein resides in the cytoplasm. The catalysed reaction is UDP-N-acetyl-alpha-D-muramoyl-L-alanine + D-glutamate + ATP = UDP-N-acetyl-alpha-D-muramoyl-L-alanyl-D-glutamate + ADP + phosphate + H(+). The protein operates within cell wall biogenesis; peptidoglycan biosynthesis. In terms of biological role, cell wall formation. Catalyzes the addition of glutamate to the nucleotide precursor UDP-N-acetylmuramoyl-L-alanine (UMA). The protein is UDP-N-acetylmuramoylalanine--D-glutamate ligase of Synechococcus sp. (strain CC9605).